Here is a 445-residue protein sequence, read N- to C-terminus: N-succinylarginine dihydrolase (445 aa).

Substrate is bound by residues 19 to 28, Asn110, and 137 to 138; these read AGLSFGNVAS and HR. The active site involves Glu174. Substrate is bound at residue Arg214. His250 is an active-site residue. Substrate contacts are provided by Asp252 and Asn363. The active-site Nucleophile is the Cys369.

Belongs to the succinylarginine dihydrolase family. As to quaternary structure, homodimer.

It carries out the reaction N(2)-succinyl-L-arginine + 2 H2O + 2 H(+) = N(2)-succinyl-L-ornithine + 2 NH4(+) + CO2. It functions in the pathway amino-acid degradation; L-arginine degradation via AST pathway; L-glutamate and succinate from L-arginine: step 2/5. Functionally, catalyzes the hydrolysis of N(2)-succinylarginine into N(2)-succinylornithine, ammonia and CO(2). This Shewanella piezotolerans (strain WP3 / JCM 13877) protein is N-succinylarginine dihydrolase.